A 140-amino-acid polypeptide reads, in one-letter code: uncharacterized protein (140 aa).

The protein belongs to the MG067/MG068/MG395 family.

This is an uncharacterized protein from Mycoplasma pneumoniae (strain ATCC 29342 / M129 / Subtype 1) (Mycoplasmoides pneumoniae).